A 646-amino-acid chain; its full sequence is RNase E specificity factor CsrD (646 aa).

The next 2 membrane-spanning stretches (helical) occupy residues 10–30 and 135–155; these read FVTL…SLSF and MTTA…FLAV. The tract at residues 152-219 is HAMP-like; the sequence is FLAVRWLQRQ…REQHSRLDTL (68 aa). Residues 194 to 224 are a coiled coil; the sequence is RTSSALDTLLREIQNAREQHSRLDTLIRSYA. Positions 254-387 constitute a GGDEF domain; the sequence is THGIVMMIRL…GGNSWAIYDD (134 aa). Positions 396 to 644 constitute an EAL domain; it reads NVRWRTLIEQ…TNVKKYSQRY (249 aa).

The protein resides in the cell membrane. Serves as a specificity factor required for RNase E-mediated decay of the small global regulatory RNAs CsrB and CsrC, it is probably not a nuclease. Nor does its activity involve c-di-GMP, despite its domain composition. Positively modulates motility gene expression, is also required for curli expression. In Escherichia coli (strain K12), this protein is RNase E specificity factor CsrD (csrD).